The primary structure comprises 119 residues: Nascent polypeptide-associated complex protein (119 aa).

Positions arginine 5–glutamate 73 constitute an NAC-A/B domain.

This sequence belongs to the NAC-alpha family. In terms of assembly, homodimer. Interacts with the ribosome. Binds ribosomal RNA.

Contacts the emerging nascent chain on the ribosome. The protein is Nascent polypeptide-associated complex protein of Thermoplasma acidophilum (strain ATCC 25905 / DSM 1728 / JCM 9062 / NBRC 15155 / AMRC-C165).